The following is a 510-amino-acid chain: ATP synthase subunit alpha, chloroplastic (510 aa).

170–177 (GDRQTGKT) lines the ATP pocket.

It belongs to the ATPase alpha/beta chains family. As to quaternary structure, F-type ATPases have 2 components, CF(1) - the catalytic core - and CF(0) - the membrane proton channel. CF(1) has five subunits: alpha(3), beta(3), gamma(1), delta(1), epsilon(1). CF(0) has four main subunits: a, b, b' and c.

It is found in the plastid. It localises to the chloroplast thylakoid membrane. It carries out the reaction ATP + H2O + 4 H(+)(in) = ADP + phosphate + 5 H(+)(out). Produces ATP from ADP in the presence of a proton gradient across the membrane. The alpha chain is a regulatory subunit. This Lotus japonicus (Lotus corniculatus var. japonicus) protein is ATP synthase subunit alpha, chloroplastic.